We begin with the raw amino-acid sequence, 190 residues long: MLDREGYRPNVGIILVNGKNEVFWGKRIREHAWQFPQGGIKYGESPVQAMYRELHEEVGLKPEHVRILGRTRDWLRYNVPDHFVRREWRGHYKGQKQIWFLLRLVGRDSDVCLRATQHPEFDAWRWSQYWVPLDAVIEFKRDVYTQALNELAVILFRRHHETRYLRQRVHGPRSTDNPSSETDGHAHIAG.

The 144-residue stretch at 6-149 (GYRPNVGIIL…KRDVYTQALN (144 aa)) folds into the Nudix hydrolase domain. Residues 38–59 (GGIKYGESPVQAMYRELHEEVG) carry the Nudix box motif. The tract at residues 167-190 (QRVHGPRSTDNPSSETDGHAHIAG) is disordered.

The protein belongs to the Nudix hydrolase family. RppH subfamily. Requires a divalent metal cation as cofactor.

In terms of biological role, accelerates the degradation of transcripts by removing pyrophosphate from the 5'-end of triphosphorylated RNA, leading to a more labile monophosphorylated state that can stimulate subsequent ribonuclease cleavage. The chain is RNA pyrophosphohydrolase from Bordetella parapertussis (strain 12822 / ATCC BAA-587 / NCTC 13253).